A 259-amino-acid chain; its full sequence is Bidirectional sugar transporter SWEET4 (259 aa).

The Extracellular portion of the chain corresponds to 1-10; it reads MVSPDTIRTA. Positions 10–94 constitute a MtN3/slv 1 domain; that stretch reads AIGVVGNGTA…TYIALFLAFS (85 aa). The chain crosses the membrane as a helical span at residues 11 to 31; the sequence is IGVVGNGTALVLFLSPVPTFI. The Cytoplasmic segment spans residues 32–44; sequence RIWKKGSVEQYSA. The helical transmembrane segment at 45–65 threads the bilayer; sequence VPYVATLLNCMMWVLYGLPAV. Residues 66–77 are Extracellular-facing; that stretch reads HPHSMLVITING. The N-linked (GlcNAc...) asparagine glycan is linked to asparagine 76. The helical transmembrane segment at 78-98 threads the bilayer; the sequence is TGMAIELTYIALFLAFSLGAV. The Cytoplasmic portion of the chain corresponds to 99-101; the sequence is RRR. The helical transmembrane segment at 102-122 threads the bilayer; the sequence is VLLLLAAEVAFVAAVAALVLN. Over 123 to 131 the chain is Extracellular; it reads LAHTHERRS. A helical transmembrane segment spans residues 132–152; that stretch reads MIVGILCVLFGTGMYAAPLSV. The MtN3/slv 2 domain maps to 133-217; it reads IVGILCVLFG…ILYAIYYKST (85 aa). Residues 153–165 are Cytoplasmic-facing; sequence MKMVIQTKSVEYM. The chain crosses the membrane as a helical span at residues 166–186; sequence PLFLSLASLVNGICWTAYALI. Residues 187-191 lie on the Extracellular side of the membrane; that stretch reads RFDLY. The chain crosses the membrane as a helical span at residues 192–212; it reads ITIPNGLGVMFAVAQLILYAI. At 213–259 the chain is on the cytoplasmic side; the sequence is YYKSTQQIIEARKRKEADHVAMTDVVVDSAKNNPSSGAAAAAANGRY.

This sequence belongs to the SWEET sugar transporter family. Forms homooligomers and/or heterooligomers.

It localises to the cell membrane. In terms of biological role, mediates both low-affinity uptake and efflux of sugar across the plasma membrane. In Oryza sativa subsp. indica (Rice), this protein is Bidirectional sugar transporter SWEET4 (SWEET4).